Here is a 547-residue protein sequence, read N- to C-terminus: Immunoglobulin epsilon heavy chain (547 aa).

At Gln-1 the chain carries Pyrrolidone carboxylic acid. 5 Ig-like domains span residues 1 to 120 (QVQL…TEVT), 130 to 223 (PSVF…KTFS), 232 to 329 (PTVK…KKCA), 333 to 437 (PRGV…TKTS), and 443 to 542 (PEVY…RAVS). The variable (V) domain, involved in antigen recognition stretch occupies residues 1-124 (QVQLVQSGAE…EGTEVTYTVS (124 aa)). Intrachain disulfides connect Cys-22–Cys-96, Cys-139–Cys-225, Cys-153–Cys-207, Cys-254–Cys-312, Cys-358–Cys-418, and Cys-464–Cys-524. The tract at residues 125–547 (GAWTLPSVFP…QRAVSVNPGK (423 aa)) is constant (C) domain. N-linked (GlcNAc...) asparagine glycosylation is found at Asn-145, Asn-173, Asn-219, Asn-265, Asn-371, Asn-383, and Asn-394.

Immunoglobulins are composed of two identical heavy chains and two identical light chains; disulfide-linked.

The protein localises to the secreted. It localises to the cell membrane. Functionally, immunoglobulins, also known as antibodies, are membrane-bound or secreted glycoproteins produced by B lymphocytes. In the recognition phase of humoral immunity, the membrane-bound immunoglobulins serve as receptors which, upon binding of a specific antigen, trigger the clonal expansion and differentiation of B lymphocytes into immunoglobulins-secreting plasma cells. Secreted immunoglobulins mediate the effector phase of humoral immunity, which results in the elimination of bound antigens. The antigen binding site is formed by the variable domain of one heavy chain, together with that of its associated light chain. Thus, each immunoglobulin has two antigen binding sites with remarkable affinity for a particular antigen. The variable domains are assembled by a process called V-(D)-J rearrangement and can then be subjected to somatic hypermutations which, after exposure to antigen and selection, allow affinity maturation for a particular antigen. The polypeptide is Immunoglobulin epsilon heavy chain (Homo sapiens (Human)).